Reading from the N-terminus, the 197-residue chain is Large ribosomal subunit protein eL15 (197 aa).

The segment at 175 to 197 (LRTGRKGSSKSRPSIRANGRLRR) is disordered.

This sequence belongs to the eukaryotic ribosomal protein eL15 family.

This Thermoplasma volcanium (strain ATCC 51530 / DSM 4299 / JCM 9571 / NBRC 15438 / GSS1) protein is Large ribosomal subunit protein eL15 (rpl15e).